A 579-amino-acid chain; its full sequence is MVQYELWAALPGASGVALACCFVAAAVALRWSGRRTARGAVVRARQRQRAGLENMDRAAQRFRLQNPDLDSEALLALPLPQLVQKLHSRELAPEAVLFTYVGKAWEVNKGTNCVTSYLADCETQLSQAPRQGLLYGVPVSLKECFTYKGQDSTLGLSLNEGVPAECDSVVVHVLKLQGAVPFVHTNVPQSMFSYDCSNPLFGQTVNPWKSSKSPGGSSGGEGALIGSGGSPLGLGTDIGGSIRFPSSFCGICGLKPTGNRLSKSGLKGCVYGQEAVRLSVGPMARDVESLALCLRALLCEDMFRLDPTVPPLPFREEVYTSSQPLRVGYYETDNYTMPSPAMRRAVLETKQSLEAAGHTLVPFLPSNIPHALETLSTGGLFSDGGHTFLQNFKGDFVDPCLGDLVSILKLPQWLKGLLAFLVKPLLPRLSAFLSNMKSRSAGKLWELQHEIEVYRKTVIAQWRALDLDVVLTPMLAPALDLNAPGRATGAVSYTMLYNCLDFPAGVVPVTTVTAEDEAQMEHYRGYFGDIWDKMLQKGMKKSVGLPVAVQCVALPWQEELCLRFMREVERLMTPEKQSS.

The chain crosses the membrane as a helical span at residues 9–29 (ALPGASGVALACCFVAAAVAL). Residues 30–403 (RWSGRRTARG…GDFVDPCLGD (374 aa)) lie on the Cytoplasmic side of the membrane. Lys142 serves as the catalytic Charge relay system. Substrate-binding positions include Met191, Ser217, and 238 to 241 (IGGS). Catalysis depends on Ser217, which acts as the Charge relay system. The active-site Acyl-ester intermediate is Ser241. Phosphoserine is present on Ser241. Residues 404 to 433 (LVSILKLPQWLKGLLAFLVKPLLPRLSAFL) lie within the membrane without spanning it. At 434–579 (SNMKSRSAGK…RLMTPEKQSS (146 aa)) the chain is on the cytoplasmic side.

It belongs to the amidase family. Homodimer. Highly expressed in the brain, small intestine, pancreas, skeletal muscle and testis. Also expressed in the kidney, liver, lung, placenta and prostate.

The protein localises to the endomembrane system. It is found in the cytoplasm. Its subcellular location is the cytoskeleton. It catalyses the reaction N-(5Z,8Z,11Z,14Z-eicosatetraenoyl)-ethanolamine + H2O = ethanolamine + (5Z,8Z,11Z,14Z)-eicosatetraenoate. It carries out the reaction (9Z)-octadecenamide + H2O = (9Z)-octadecenoate + NH4(+). The enzyme catalyses 2-(5Z,8Z,11Z,14Z-eicosatetraenoyl)-glycerol + H2O = glycerol + (5Z,8Z,11Z,14Z)-eicosatetraenoate + H(+). The catalysed reaction is N-(9Z-octadecenoyl) ethanolamine + H2O = ethanolamine + (9Z)-octadecenoate. It catalyses the reaction N-hexadecanoylethanolamine + H2O = ethanolamine + hexadecanoate. It carries out the reaction hexadecanamide + H2O = hexadecanoate + NH4(+). The enzyme catalyses tetradecamide + H2O = tetradecanoate + NH4(+). The catalysed reaction is N-(9Z-octadecenoyl)-taurine + H2O = taurine + (9Z)-octadecenoate. It catalyses the reaction (9Z,12Z,15Z)-octadecatrienamide + H2O = (9Z,12Z,15Z)-octadecatrienoate + NH4(+). It carries out the reaction (5Z,8Z,11Z,14Z)-eicosatetraenamide + H2O = (5Z,8Z,11Z,14Z)-eicosatetraenoate + NH4(+). The enzyme catalyses (6Z)-octadecenamide + H2O = (6Z)-octadecenoate + NH4(+). The catalysed reaction is (15Z)-tetracosenamide + H2O = (15Z)-tetracosenoate + NH4(+). It catalyses the reaction (8Z,11Z,14Z)-eicosatrienamide + H2O = (8Z,11Z,14Z)-eicosatrienoate + NH4(+). It carries out the reaction (11Z,14Z,17Z)-eicosatrienamide + H2O = (11Z,14Z,17Z)-eicosatrienoate + NH4(+). The enzyme catalyses (11Z,14Z)-eicosadienamide + H2O = (11Z,14Z)-eicosadienoate + NH4(+). The catalysed reaction is (9Z,12Z)-octadecadienamide + H2O = (9Z,12Z)-octadecadienoate + NH4(+). It catalyses the reaction 1-O-methyl-(5Z,8Z,11Z,14Z)-eicosatetraenoate + H2O = methanol + (5Z,8Z,11Z,14Z)-eicosatetraenoate + H(+). It carries out the reaction (11Z)-eicosenamide + H2O = (11Z)-eicosenoate + NH4(+). The enzyme catalyses N-(9Z-hexadecenoyl) ethanolamine + H2O = (9Z)-hexadecenoate + ethanolamine. The catalysed reaction is N-octadecanoyl ethanolamine + H2O = octadecanoate + ethanolamine. It catalyses the reaction N-docosanoyl-ethanolamine + H2O = docosanoate + ethanolamine. It carries out the reaction N-tetracosanoyl-taurine + H2O = tetracosanoate + taurine. The enzyme catalyses N-(15Z-tetracosenoyl)-ethanolamine + H2O = (15Z)-tetracosenoate + ethanolamine. The catalysed reaction is N-docosanoyl-taurine + H2O = docosanoate + taurine. It catalyses the reaction N-(15Z-tetracosenoyl)-taurine + H2O = (15Z)-tetracosenoate + taurine. It carries out the reaction N-tricosanoyl-taurine + H2O = tricosanoate + taurine. The enzyme catalyses (9Z)-octadecenoate + glycine = N-(9Z-octadecenoyl)glycine + H2O. The catalysed reaction is N-(5Z,8Z,11Z,14Z)-eicosatetraenoyl-glycine + H2O = (5Z,8Z,11Z,14Z)-eicosatetraenoate + glycine. It catalyses the reaction N-(5Z,8Z,11Z,14Z-eicosatetraenoyl)-L-serine + H2O = (5Z,8Z,11Z,14Z)-eicosatetraenoate + L-serine. Its activity is regulated as follows. Inhibited by O-aryl carbamates and alpha-keto heterocycles. Inhibited by trifluoromethyl ketone. Its function is as follows. Catalyzes the hydrolysis of endogenous amidated lipids like the sleep-inducing lipid oleamide ((9Z)-octadecenamide), the endocannabinoid anandamide (N-(5Z,8Z,11Z,14Z-eicosatetraenoyl)-ethanolamine), as well as other fatty amides, to their corresponding fatty acids, thereby regulating the signaling functions of these molecules. Hydrolyzes polyunsaturated substrate anandamide preferentially as compared to monounsaturated substrates. It can also catalyze the hydrolysis of the endocannabinoid 2-arachidonoylglycerol (2-(5Z,8Z,11Z,14Z-eicosatetraenoyl)-glycerol). FAAH cooperates with PM20D1 in the hydrolysis of amino acid-conjugated fatty acids such as N-fatty acyl glycine and N-fatty acyl-L-serine, thereby acting as a physiological regulator of specific subsets of intracellular, but not of extracellular, N-fatty acyl amino acids. This chain is Fatty-acid amide hydrolase 1 (FAAH), found in Homo sapiens (Human).